Consider the following 556-residue polypeptide: Beta-hexosaminidase subunit beta (556 aa).

The signal sequence occupies residues 1-42; it reads MELCGLGLPRPPMLLALLLATLLAAMLALLTQVALVVQVAEA. Positions 43-121 are excised as a propeptide; sequence ARAPSVSAKP…HHEPAEFQAK (79 aa). Residue asparagine 84 is glycosylated (N-linked (GlcNAc...) asparagine). Residues cysteine 91 and cysteine 137 are joined by a disulfide bond. N-linked (GlcNAc...) asparagine glycans are attached at residues asparagine 142, asparagine 190, and asparagine 327. Intrachain disulfides connect cysteine 309–cysteine 360 and cysteine 534–cysteine 551. Glutamate 355 serves as the catalytic Proton donor.

It belongs to the glycosyl hydrolase 20 family. There are 3 forms of beta-hexosaminidase: hexosaminidase A is a heterodimer composed of one subunit alpha and one subunit beta (chain A and B); hexosaminidase B is a homodimer of two beta subunits (two chains A and B); hexosaminidase S is a homodimer of two alpha subunits. The composition of the dimer (isozyme A versus isozyme S) has a significant effect on the substrate specificity of the alpha subunit active site. Post-translationally, N-linked glycans at Asn-142 and Asn-190 consist of Man(3)-GlcNAc(2) and Man(5 to 7)-GlcNAc(2), respectively. In terms of processing, the beta-A and beta-B chains are produced by proteolytic processing of the precursor beta chain.

It is found in the lysosome. The protein resides in the cytoplasmic vesicle. It localises to the secretory vesicle. Its subcellular location is the cortical granule. The catalysed reaction is Hydrolysis of terminal non-reducing N-acetyl-D-hexosamine residues in N-acetyl-beta-D-hexosaminides.. It catalyses the reaction N-acetyl-beta-D-galactosaminyl-(1-&gt;4)-beta-D-3-sulfogalactosyl-(1-&gt;4)-beta-D-glucosyl-(1&lt;-&gt;1')-ceramide + H2O = a beta-D-3-sulfogalactosyl-(1-&gt;4)-beta-D-glucosyl-(1&lt;-&gt;1')-ceramide + N-acetyl-beta-D-galactosamine. The enzyme catalyses a ganglioside GM2 (d18:1(4E)) + H2O = a ganglioside GM3 (d18:1(4E)) + N-acetyl-beta-D-galactosamine. It carries out the reaction a ganglioside GM2 + H2O = a ganglioside GM3 + N-acetyl-beta-D-galactosamine. The catalysed reaction is beta-D-GalNAc-(1-&gt;4)-alpha-L-IdoA-(1-&gt;3)-beta-D-GalNAc-4-sulfate-(1-&gt;4)-alpha-L-IdoA-(1-&gt;3)-D-GalNAc-4-sulfate + H2O = alpha-L-IdoA-(1-&gt;3)-beta-D-GalNAc-4-sulfate-(1-&gt;4)-alpha-L-IdoA-(1-&gt;3)-D-GalNAc-4-sulfate + N-acetyl-D-galactosamine. It catalyses the reaction N-acetyl-beta-D-6-sulfogalactosaminyl-(1-&gt;4)-alpha-L-iduronyl-(1-&gt;3)-N-acetyl-D-6-sulfogalactosamine + H2O = alpha-L-iduronyl-(1-&gt;3)-N-acetyl-D-6-sulfogalactosamine + N-acetyl-D-6-sulfogalactosamine. Its activity is regulated as follows. Addition of GM2A stimulates the hydrolysis of sulfated glycosphingolipid SM2 and the ganglioside GM2. In terms of biological role, hydrolyzes the non-reducing end N-acetyl-D-hexosamine and/or sulfated N-acetyl-D-hexosamine of glycoconjugates, such as the oligosaccharide moieties from proteins and neutral glycolipids, or from certain mucopolysaccharides. The isozyme B does not hydrolyze each of these substrates, however hydrolyzes efficiently neutral oligosaccharide. Only the isozyme A is responsible for the degradation of GM2 gangliosides in the presence of GM2A. During fertilization is responsible, at least in part, for the zona block to polyspermy. Present in the cortical granules of non-activated oocytes, is exocytosed during the cortical reaction in response to oocyte activation and inactivates the sperm galactosyltransferase-binding site, accounting for the block in sperm binding to the zona pellucida. This chain is Beta-hexosaminidase subunit beta, found in Homo sapiens (Human).